The chain runs to 384 residues: Odorant receptor 46a, isoform B (384 aa).

At M1–R37 the chain is on the cytoplasmic side. Residues F38–N58 form a helical membrane-spanning segment. N-linked (GlcNAc...) asparagine glycosylation is present at N59. Residues N59–E65 lie on the Extracellular side of the membrane. A helical membrane pass occupies residues I66 to L86. Residues K87 to Y130 are Cytoplasmic-facing. A helical transmembrane segment spans residues G131–G151. Topologically, residues E152 to G165 are extracellular. Residues W166 to L186 form a helical membrane-spanning segment. Residues N187–L247 are Cytoplasmic-facing. A helical membrane pass occupies residues V248–V268. The Extracellular portion of the chain corresponds to S269–D283. The chain crosses the membrane as a helical span at residues A284–I304. The Cytoplasmic portion of the chain corresponds to C305–P348. The chain crosses the membrane as a helical span at residues M349–V369. N370 is a glycosylation site (N-linked (GlcNAc...) asparagine). At N370–S384 the chain is on the extracellular side.

This sequence belongs to the insect chemoreceptor superfamily. Heteromeric odorant receptor channel (TC 1.A.69) family. Or2a subfamily. In terms of assembly, interacts with Orco. Complexes exist early in the endomembrane system in olfactory sensory neurons (OSNs), coupling these complexes to the conserved ciliary trafficking pathway. In terms of tissue distribution, isoform B is expressed in the antenna.

Its subcellular location is the cell membrane. Functionally, odorant receptor which mediates acceptance or avoidance behavior, depending on its substrates. The odorant receptor repertoire encodes a large collection of odor stimuli that vary widely in identity, intensity, and duration. May form a complex with Orco to form odorant-sensing units, providing sensitive and prolonged odorant signaling and calcium permeability. The polypeptide is Odorant receptor 46a, isoform B (Or46a) (Drosophila melanogaster (Fruit fly)).